Here is a 355-residue protein sequence, read N- to C-terminus: UDP-N-acetylglucosamine--N-acetylmuramyl-(pentapeptide) pyrophosphoryl-undecaprenol N-acetylglucosamine transferase (355 aa).

Residues 7 to 9, N119, R159, S187, I241, and Q286 each bind UDP-N-acetyl-alpha-D-glucosamine; that span reads TGG.

This sequence belongs to the glycosyltransferase 28 family. MurG subfamily.

The protein localises to the cell inner membrane. It catalyses the reaction di-trans,octa-cis-undecaprenyl diphospho-N-acetyl-alpha-D-muramoyl-L-alanyl-D-glutamyl-meso-2,6-diaminopimeloyl-D-alanyl-D-alanine + UDP-N-acetyl-alpha-D-glucosamine = di-trans,octa-cis-undecaprenyl diphospho-[N-acetyl-alpha-D-glucosaminyl-(1-&gt;4)]-N-acetyl-alpha-D-muramoyl-L-alanyl-D-glutamyl-meso-2,6-diaminopimeloyl-D-alanyl-D-alanine + UDP + H(+). The protein operates within cell wall biogenesis; peptidoglycan biosynthesis. Its function is as follows. Cell wall formation. Catalyzes the transfer of a GlcNAc subunit on undecaprenyl-pyrophosphoryl-MurNAc-pentapeptide (lipid intermediate I) to form undecaprenyl-pyrophosphoryl-MurNAc-(pentapeptide)GlcNAc (lipid intermediate II). This Nitrosomonas eutropha (strain DSM 101675 / C91 / Nm57) protein is UDP-N-acetylglucosamine--N-acetylmuramyl-(pentapeptide) pyrophosphoryl-undecaprenol N-acetylglucosamine transferase.